A 218-amino-acid chain; its full sequence is Phosphoribosylformylglycinamidine synthase subunit PurQ (218 aa).

The Glutamine amidotransferase type-1 domain occupies 2 to 218 (RVGVIRFPGS…FFRGILKFRG (217 aa)). C85 serves as the catalytic Nucleophile. Catalysis depends on residues H192 and E194.

As to quaternary structure, part of the FGAM synthase complex composed of 1 PurL, 1 PurQ and 2 PurS subunits.

The protein localises to the cytoplasm. The enzyme catalyses N(2)-formyl-N(1)-(5-phospho-beta-D-ribosyl)glycinamide + L-glutamine + ATP + H2O = 2-formamido-N(1)-(5-O-phospho-beta-D-ribosyl)acetamidine + L-glutamate + ADP + phosphate + H(+). The catalysed reaction is L-glutamine + H2O = L-glutamate + NH4(+). The protein operates within purine metabolism; IMP biosynthesis via de novo pathway; 5-amino-1-(5-phospho-D-ribosyl)imidazole from N(2)-formyl-N(1)-(5-phospho-D-ribosyl)glycinamide: step 1/2. Its function is as follows. Part of the phosphoribosylformylglycinamidine synthase complex involved in the purines biosynthetic pathway. Catalyzes the ATP-dependent conversion of formylglycinamide ribonucleotide (FGAR) and glutamine to yield formylglycinamidine ribonucleotide (FGAM) and glutamate. The FGAM synthase complex is composed of three subunits. PurQ produces an ammonia molecule by converting glutamine to glutamate. PurL transfers the ammonia molecule to FGAR to form FGAM in an ATP-dependent manner. PurS interacts with PurQ and PurL and is thought to assist in the transfer of the ammonia molecule from PurQ to PurL. This is Phosphoribosylformylglycinamidine synthase subunit PurQ from Methanothermobacter thermautotrophicus (strain ATCC 29096 / DSM 1053 / JCM 10044 / NBRC 100330 / Delta H) (Methanobacterium thermoautotrophicum).